Reading from the N-terminus, the 585-residue chain is Packaging protein UL32 (585 aa).

The tract at residues 1-25 is disordered; sequence MDRVESEEPMDGFESPVFSENTSSN. The Zn(2+) site is built by Cys107, Cys110, His187, Cys193, Cys408, Cys411, His484, and Cys491. 2 zinc finger regions span residues 107–193 and 408–491; these read CLVC…LHVC and CMLC…DLLC.

This sequence belongs to the herpesviridae UL32 protein family.

The protein resides in the host cytoplasm. It localises to the host nucleus. In terms of biological role, plays a role in efficient localization of neo-synthesized capsids to nuclear replication compartments, thereby controlling cleavage and packaging of virus genomic DNA. This is Packaging protein UL32 (26) from Varicella-zoster virus (strain Dumas) (HHV-3).